A 334-amino-acid polypeptide reads, in one-letter code: NAD-dependent protein deacetylase sirtuin-3 (334 aa).

The Deacetylase sirtuin-type domain maps to 53-315; the sequence is SSEKKFSLQD…ERLVDLLGWT (263 aa). An N6-succinyllysine modification is found at K57. Residues 80–100 and 163–166 contribute to the NAD(+) site; these read GAGISTPSGIPDFRSPGSGLY and QNID. H183 serves as the catalytic Proton acceptor. 4 residues coordinate Zn(2+): C191, C194, C215, and C218. NAD(+) is bound by residues 254-256 and 279-281; these read GTS and NRD.

Belongs to the sirtuin family. Class I subfamily. Upon metabolic stress, forms a complex composed of FOXO3, SIRT3 and mitochondrial RNA polymerase POLRMT; the complex is recruited to mtDNA in a SIRT3-dependent manner. Also forms a complex composed of FOXO3, SIRT3, TFAM and POLRMT. Interacts with NDUFA9, ACSS1, IDH2 and GDH. Interacts with PCCA. It depends on Zn(2+) as a cofactor. As to expression, expressed in cardiomyocytes (at protein level). Expressed in the brain, liver, kidney and testes. Expressed in skeletal muscles (at protein level).

It is found in the mitochondrion matrix. Its subcellular location is the cytoplasm. The catalysed reaction is N(6)-acetyl-L-lysyl-[protein] + NAD(+) + H2O = 2''-O-acetyl-ADP-D-ribose + nicotinamide + L-lysyl-[protein]. The enzyme catalyses N(6)-[(S)-lactoyl]-L-lysyl-[protein] + NAD(+) + H2O = 2''-O-(S)-lactoyl-ADP-D-ribose + nicotinamide + L-lysyl-[protein]. Functionally, NAD-dependent protein deacetylase. Activates or deactivates mitochondrial target proteins by deacetylating key lysine residues. Known targets include ACSS1, IDH, GDH, PDHA1, SOD2, LCAD, SDHA, MRPL12 and the ATP synthase subunit ATP5PO. Contributes to the regulation of the cellular energy metabolism. Important for regulating tissue-specific ATP levels. In response to metabolic stress, deacetylates transcription factor FOXO3 and recruits FOXO3 and mitochondrial RNA polymerase POLRMT to mtDNA to promote mtDNA transcription. Acts as a regulator of ceramide metabolism by mediating deacetylation of ceramide synthases CERS1, CERS2 and CERS6, thereby increasing their activity and promoting mitochondrial ceramide accumulation. Regulates hepatic lipogenesis. Uses NAD(+) substrate imported by SLC25A47, triggering downstream activation of PRKAA1/AMPK-alpha signaling cascade that ultimately downregulates sterol regulatory element-binding protein (SREBP) transcriptional activities and ATP-consuming lipogenesis to restore cellular energy balance. In addition to protein deacetylase activity, also acts as a protein-lysine deacylase by mediating delactylation of proteins, such as CCNE2 and 'Lys-16' of histone H4 (H4K16la). The sequence is that of NAD-dependent protein deacetylase sirtuin-3 from Mus musculus (Mouse).